The following is a 570-amino-acid chain: Interleukin-1 receptor accessory protein (570 aa).

The signal sequence occupies residues 1–20 (MGLLWYLMSLSFYGILQSHA). Ig-like C2-type domains lie at 21–128 (SERC…VAFP), 139–230 (NSAM…RTVT), and 243–348 (PQIY…AKVK). Over 21–367 (SERCDDWGLD…VELACGFGAT (347 aa)) the chain is Extracellular. Cystine bridges form between Cys-24–Cys-122, Cys-47–Cys-114, Cys-137–Cys-181, Cys-160–Cys-212, and Cys-266–Cys-332. N-linked (GlcNAc...) asparagine glycosylation is present at Asn-57. The interval 69–85 (IWYWTRQDRDLEEPINF) is essential for interaction with PTPRD. N-linked (GlcNAc...) asparagine glycosylation is found at Asn-107, Asn-111, and Asn-118. Asn-196, Asn-209, and Asn-299 each carry an N-linked (GlcNAc...) asparagine glycan. Residues 368–388 (VFLVVVLIVVYHVYWLEMVLF) form a helical membrane-spanning segment. Residues 389–570 (YRAHFGTDET…GLSYSSLKNV (182 aa)) are Cytoplasmic-facing. Positions 403–546 (KEYDIYVSYA…RFWKQLQVAM (144 aa)) constitute a TIR domain. Glu-482 is a catalytic residue. A disordered region spans residues 550–570 (KSPRWSSNDKQGLSYSSLKNV). Positions 553–570 (RWSSNDKQGLSYSSLKNV) are enriched in polar residues.

Belongs to the interleukin-1 receptor family. As to quaternary structure, the interleukin-36 receptor complex is a heterodimer of IL1RL2 and IL1RAP; the association is inhibited by IL36RN. The interleukin-1 receptor complex is a heterodimer of IL1R1 and IL1RAP. Associates with IL1R2 to form a non-signaling interleukin-1 receptor complex. Interacts with IL-33-bound IL1RL1 to form the minimal interleukin-33 signaling complex with a 1:1:1 stoichiometry. Interacts with KIT (independently of stimulation with KITLG/SCF). A mast cell-specific KITLG/SCF-induced interleukin-33 signaling complex contains IL1RL1, IL1RAP, KIT and MYD88. Interacts (via the first immunoglobilin domain) with PTPRD (via the third immunoglobilin domain); induces pre- and postsynaptic differentiation of neurons. As to expression, detected in lung, brain, spleen, thymus and liver. Expressed in brain endothelial cells, astrocytes, microglia and neurons. Isoform 3 is predominantly expressed in brain; expressed in hippocampal neurons.

It localises to the cell membrane. The protein localises to the secreted. The catalysed reaction is NAD(+) + H2O = ADP-D-ribose + nicotinamide + H(+). Its function is as follows. Coreceptor for IL1RL2 in the IL-36 signaling system. Coreceptor with IL1R1 in the IL-1 signaling system. Associates with IL1R1 bound to IL1B to form the high affinity interleukin-1 receptor complex which mediates interleukin-1-dependent activation of NF-kappa-B and other pathways. Signaling involves the recruitment of adapter molecules such as TOLLIP, MYD88, and IRAK1 or IRAK2 via the respective TIR domains of the receptor/coreceptor subunits. Recruits TOLLIP to the signaling complex. Does not bind to interleukin-1 alone; binding of IL1RN to IL1R1, prevents its association with IL1R1 to form a signaling complex. The cellular response is modulated through a non-signaling association with the membrane IL1R2 decoy receptor. Secreted forms (isoforms 2 and 3) associate with secreted ligand-bound IL1R2 and increase the affinity of secreted IL1R2 for IL1B; this complex formation may be the dominant mechanism for neutralization of IL1B by secreted/soluble receptors. Coreceptor for IL1RL1 in the IL-33 signaling system. Can bidirectionally induce pre- and postsynaptic differentiation of neurons by trans-synaptically binding to PTPRD. May play a role in IL1B-mediated costimulation of IFNG production from T-helper 1 (Th1) cells. Functionally, associates with secreted ligand-bound IL1R2 and increases the affinity of secreted IL1R2 for IL1B; this complex formation may be the dominant mechanism for neutralization of IL1B by secreted/soluble receptors. Enhances the ability of secreted IL1R1 to inhibit IL-33 signaling. In terms of biological role, required for Src phosphorylation by IL1B. Required for IL1B-potentiated NMDA-induced calcium influx in neurons acting in cooperation with IL1R1 isoform 2 to mediate Akt kinase activation. This is Interleukin-1 receptor accessory protein (Il1rap) from Mus musculus (Mouse).